A 597-amino-acid polypeptide reads, in one-letter code: Large ribosomal subunit assembly factor BipA (597 aa).

Residues 3 to 198 enclose the tr-type G domain; sequence LPIRNVAIIA…AILHHVPPPA (196 aa). GTP contacts are provided by residues 15-20 and 128-131; these read DHGKTT and NKID.

Belongs to the TRAFAC class translation factor GTPase superfamily. Classic translation factor GTPase family. BipA subfamily. Monomer.

It is found in the cytoplasm. The catalysed reaction is GTP + H2O = GDP + phosphate + H(+). A 50S ribosomal subunit assembly protein with GTPase activity, required for 50S subunit assembly at low temperatures, may also play a role in translation. Binds GTP and analogs. Binds the 70S ribosome between the 30S and 50S subunits, in a similar position as ribosome-bound EF-G; it contacts a number of ribosomal proteins, both rRNAs and the A-site tRNA. This Synechocystis sp. (strain ATCC 27184 / PCC 6803 / Kazusa) protein is Large ribosomal subunit assembly factor BipA.